The primary structure comprises 106 residues: MTQPDMSQILAQAQQMQAKLQEAQREILATTVTGTAGNGLVSIDMQGNGMVSSVTIDPKVVDADDVETLQDLLVGAFAEAHEKLGTLAEQKMGPLSQGFDGLGGMF.

It belongs to the YbaB/EbfC family. In terms of assembly, homodimer.

Its subcellular location is the cytoplasm. The protein localises to the nucleoid. In terms of biological role, binds to DNA and alters its conformation. May be involved in regulation of gene expression, nucleoid organization and DNA protection. The protein is Nucleoid-associated protein DIP0260 of Corynebacterium diphtheriae (strain ATCC 700971 / NCTC 13129 / Biotype gravis).